Consider the following 451-residue polypeptide: Glycylpeptide N-tetradecanoyltransferase (451 aa).

Tetradecanoyl-CoA-binding positions include 177–179 (LCI) and 185–189 (NKRLA). Leu451 serves as the catalytic Proton acceptor; via carboxylate.

Belongs to the NMT family. As to quaternary structure, monomer.

It localises to the cytoplasm. It catalyses the reaction N-terminal glycyl-[protein] + tetradecanoyl-CoA = N-tetradecanoylglycyl-[protein] + CoA + H(+). With respect to regulation, competitively inhibited by SC-58272, a peptidomimetic derived from the N-terminal sequence of a natural substrate. Adds a myristoyl group to the N-terminal glycine residue of certain cellular proteins. Substrate specificity requires an N-terminal glycine in the nascent polypeptide substrates. Ser is present at position 5 in almost all known N-myristoyl proteins and Lys is commonly encountered at postion 6. Basic residues are preferred at positions 7 and 8. In Candida albicans (strain SC5314 / ATCC MYA-2876) (Yeast), this protein is Glycylpeptide N-tetradecanoyltransferase (NMT1).